The primary structure comprises 261 residues: Protein FAM78B (261 aa).

The protein belongs to the FAM78 family.

This is Protein FAM78B (FAM78B) from Homo sapiens (Human).